The sequence spans 341 residues: Ferredoxin--NADP reductase (341 aa).

The FAD site is built by Asp-38, Gln-46, Tyr-51, Val-91, Phe-125, Asp-292, and Thr-333.

The protein belongs to the ferredoxin--NADP reductase type 2 family. As to quaternary structure, homodimer. The cofactor is FAD.

It catalyses the reaction 2 reduced [2Fe-2S]-[ferredoxin] + NADP(+) + H(+) = 2 oxidized [2Fe-2S]-[ferredoxin] + NADPH. This is Ferredoxin--NADP reductase from Gluconacetobacter diazotrophicus (strain ATCC 49037 / DSM 5601 / CCUG 37298 / CIP 103539 / LMG 7603 / PAl5).